Reading from the N-terminus, the 693-residue chain is Polyribonucleotide nucleotidyltransferase (693 aa).

2 residues coordinate Mg(2+): Asp486 and Asp492. Residues 553-612 (PRIHTIKINPEKIKDVIGKGGSVIRMLTEETGTTIEIEDDGTVKISAVMQEKAKCAIQRI) enclose the KH domain. The region spanning 622–690 (GSVYTGKVTR…RQGRLRLSIK (69 aa)) is the S1 motif domain.

The protein belongs to the polyribonucleotide nucleotidyltransferase family. Component of the RNA degradosome, which is a multiprotein complex involved in RNA processing and mRNA degradation. Mg(2+) is required as a cofactor.

Its subcellular location is the cytoplasm. The catalysed reaction is RNA(n+1) + phosphate = RNA(n) + a ribonucleoside 5'-diphosphate. Functionally, involved in mRNA degradation. Catalyzes the phosphorolysis of single-stranded polyribonucleotides processively in the 3'- to 5'-direction. This chain is Polyribonucleotide nucleotidyltransferase, found in Buchnera aphidicola subsp. Baizongia pistaciae (strain Bp).